Consider the following 503-residue polypeptide: MVLEVLNPRHYNITSMVTEVAPVASIAILLLTGFLLLVWNYEDTSSIPGPGYFLGIGPLISHCRFLWMGIGSTCNYYNKTYGEFVRVWICGEETLIISKSSSMFHIMKHSHYTSRFGSKLGLQCIGMHEKGIIFNNNPALWKAVRPFFTKALSGPGLVRMVTVCADSITKHLDRLEEVRNELGYVDVLTLMRRIMLDTSNKLFLGIPLDERAIVVKIQGYFDAWQALLLKPDIFFKISWLCRKYEKSVKDLKDAMEILIEEKRQRISTAEKLEDCMDFATELIFAEKRGDLTKENVDQCILEMLIAAPDTMSVSVFFMLFLIAKHPQVEEAIMKEIQTVVGERDIRIDDMQKLKVVENFIYESMRYQPVVDLVMRKALEDDVIDGYPVKKGTNIILNIGRMHRLEFFPKPNEFTLENFARNVPYRYFQPFGFGPRACAGKYIAMVMMKVTLVTLLRSFHVQTLQGRCIEKMQKKNDLSLHPDETSDLLGMIFIPRNSDKCLDH.

Helical transmembrane passes span 19–39 (EVAP…LLVW), 51–71 (GYFL…MGIG), and 303–323 (MLIA…FLIA). Asp309 and Met374 together coordinate substrate. Residue Cys437 coordinates heme.

It belongs to the cytochrome P450 family. Heme is required as a cofactor.

The protein resides in the endoplasmic reticulum membrane. It is found in the microsome membrane. The catalysed reaction is testosterone + 3 reduced [NADPH--hemoprotein reductase] + 3 O2 = 17beta-estradiol + formate + 3 oxidized [NADPH--hemoprotein reductase] + 4 H2O + 4 H(+). It catalyses the reaction androst-4-ene-3,17-dione + 3 reduced [NADPH--hemoprotein reductase] + 3 O2 = estrone + formate + 3 oxidized [NADPH--hemoprotein reductase] + 4 H2O + 4 H(+). The enzyme catalyses androst-4-ene-3,17-dione + reduced [NADPH--hemoprotein reductase] + O2 = 19-hydroxyandrost-4-ene-3,17-dione + oxidized [NADPH--hemoprotein reductase] + H2O + H(+). It carries out the reaction 19-hydroxyandrost-4-ene-3,17-dione + reduced [NADPH--hemoprotein reductase] + O2 = 19-oxo-androst-4-ene-3,17-dione + oxidized [NADPH--hemoprotein reductase] + 2 H2O + H(+). The catalysed reaction is 19-oxo-androst-4-ene-3,17-dione + reduced [NADPH--hemoprotein reductase] + O2 = estrone + formate + oxidized [NADPH--hemoprotein reductase] + H2O + 2 H(+). It catalyses the reaction estrone + reduced [NADPH--hemoprotein reductase] + O2 = 2-hydroxyestrone + oxidized [NADPH--hemoprotein reductase] + H2O + H(+). The enzyme catalyses 17beta-hydroxy-5alpha-androstan-3-one + reduced [NADPH--hemoprotein reductase] + O2 = 17beta,19-dihydroxy-3-oxo-5alpha-androstanone + oxidized [NADPH--hemoprotein reductase] + H2O + H(+). It carries out the reaction 17beta,19-dihydroxy-3-oxo-5alpha-androstanone + reduced [NADPH--hemoprotein reductase] + O2 = 17beta-hydroxy-3,19-dioxo-5alpha-androstanone + oxidized [NADPH--hemoprotein reductase] + 2 H2O + H(+). The catalysed reaction is 17beta-hydroxy-3,19-dioxo-5alpha-androstanone + reduced [NADPH--hemoprotein reductase] + O2 = 17beta-hydroxy-3-oxo-19-nor-5alpha-androst-1-ene + formate + oxidized [NADPH--hemoprotein reductase] + H2O + 2 H(+). It functions in the pathway steroid hormone biosynthesis. Its function is as follows. A cytochrome P450 monooxygenase that catalyzes the conversion of C19 androgens, androst-4-ene-3,17-dione (androstenedione) and testosterone to the C18 estrogens, estrone and estradiol, respectively. Catalyzes three successive oxidations of C19 androgens: two conventional oxidations at C19 yielding 19-hydroxy and 19-oxo/19-aldehyde derivatives, followed by a third oxidative aromatization step that involves C1-beta hydrogen abstraction combined with cleavage of the C10-C19 bond to yield a phenolic A ring and formic acid. Alternatively, the third oxidative reaction yields a 19-norsteroid and formic acid. Converts dihydrotestosterone to delta1,10-dehydro 19-nordihydrotestosterone and may play a role in homeostasis of this potent androgen. Also displays 2-hydroxylase activity toward estrone. Mechanistically, uses molecular oxygen inserting one oxygen atom into a substrate, and reducing the second into a water molecule, with two electrons provided by NADPH via cytochrome P450 reductase (CPR; NADPH-ferrihemoprotein reductase). This Leucopleurus acutus (Atlantic white-sided dolphin) protein is Aromatase (CYP19A1).